Here is a 262-residue protein sequence, read N- to C-terminus: NADP-dependent mannitol dehydrogenase (262 aa).

NADP(+)-binding residues include I23, D69, N96, and R129. Residue S149 is the Proton donor of the active site. Residues Y169, K173, V202, T204, and Q206 each coordinate NADP(+). Y169 (proton acceptor) is an active-site residue. K173 acts as the Lowers pKa of active site Tyr in catalysis.

Belongs to the short-chain dehydrogenases/reductases (SDR) family. Homotetramer.

The catalysed reaction is D-mannitol + NADP(+) = D-fructose + NADPH + H(+). In Agaricus bisporus (White button mushroom), this protein is NADP-dependent mannitol dehydrogenase (mtdH).